Here is a 142-residue protein sequence, read N- to C-terminus: Succinate dehydrogenase subunit 6, mitochondrial (142 aa).

N-acetylglycine is present on Gly-2.

In terms of assembly, component of complex II composed of eight subunits in plants: four classical SDH subunits SDH1, SDH2, SDH3 and SDH4 (a flavoprotein (FP), an iron-sulfur protein (IP), and a cytochrome b composed of a large and a small subunit.), as well as four subunits unknown in mitochondria from bacteria and heterotrophic eukaryotes.

The protein resides in the mitochondrion inner membrane. It participates in carbohydrate metabolism; tricarboxylic acid cycle. This is Succinate dehydrogenase subunit 6, mitochondrial from Arabidopsis thaliana (Mouse-ear cress).